Reading from the N-terminus, the 216-residue chain is GTP-binding nuclear protein Ran, testis-specific isoform (216 aa).

N-acetylalanine is present on alanine 2. One can recognise a Small GTPase Ran-type domain in the interval 7–171 (PQIQFKLVLV…FWLARKLIGD (165 aa)). 17-24 (GDGGTGKT) lines the GTP pocket. Threonine 24 carries the post-translational modification Phosphothreonine. The switch-I stretch occupies residues 37–45 (KEYVATLGV). The residue at position 60 (lysine 60) is an N6-acetyllysine. 65–69 (DTAGQ) provides a ligand contact to GTP. Residues 68-84 (GQEKFGGLRDGYYIQAQ) form a switch-II region. Lysine 71 is subject to N6-acetyllysine; alternate. Residue lysine 71 forms a Glycyl lysine isopeptide (Lys-Gly) (interchain with G-Cter in SUMO2); alternate linkage. A Glycyl lysine isopeptide (Lys-Gly) (interchain with G-Cter in ubiquitin); alternate cross-link involves residue lysine 71. Residue lysine 99 is modified to N6-acetyllysine. Position 122–125 (122–125 (NKVD)) interacts with GTP. Residue lysine 134 is modified to N6-acetyllysine. Residue lysine 152 forms a Glycyl lysine isopeptide (Lys-Gly) (interchain with G-Cter in SUMO2) linkage. Residue lysine 159 is modified to N6-acetyllysine; alternate. An N6-succinyllysine; alternate modification is found at lysine 159.

The protein belongs to the small GTPase superfamily. Ran family. Testis specific.

The protein resides in the nucleus. The enzyme catalyses GTP + H2O = GDP + phosphate + H(+). Its function is as follows. GTP-binding protein involved in nucleocytoplasmic transport. Required for the import of protein into the nucleus and also for RNA export. Involved in chromatin condensation and control of cell cycle. The chain is GTP-binding nuclear protein Ran, testis-specific isoform (Rasl2-9) from Rattus norvegicus (Rat).